A 238-amino-acid polypeptide reads, in one-letter code: tRNA1(Val) (adenine(37)-N6)-methyltransferase (238 aa).

Belongs to the methyltransferase superfamily. tRNA (adenine-N(6)-)-methyltransferase family.

The protein resides in the cytoplasm. It catalyses the reaction adenosine(37) in tRNA1(Val) + S-adenosyl-L-methionine = N(6)-methyladenosine(37) in tRNA1(Val) + S-adenosyl-L-homocysteine + H(+). In terms of biological role, specifically methylates the adenine in position 37 of tRNA(1)(Val) (anticodon cmo5UAC). This chain is tRNA1(Val) (adenine(37)-N6)-methyltransferase, found in Shewanella sp. (strain W3-18-1).